The sequence spans 476 residues: Siroheme synthase (476 aa).

The interval 1–207 (MTANALFPLF…QRHAEAEAVL (207 aa)) is precorrin-2 dehydrogenase /sirohydrochlorin ferrochelatase. NAD(+) contacts are provided by residues 25 to 26 (KV) and 46 to 47 (PS). Residue S132 is modified to Phosphoserine. Residues 220 to 476 (GSVTLVGAGA…SAPCPPARIL (257 aa)) form a uroporphyrinogen-III C-methyltransferase region. Catalysis depends on D252, which acts as the Proton acceptor. Catalysis depends on K274, which acts as the Proton donor. S-adenosyl-L-methionine-binding positions include 305–307 (GGD), V310, 335–336 (TA), M387, and G416.

It in the N-terminal section; belongs to the precorrin-2 dehydrogenase / sirohydrochlorin ferrochelatase family. The protein in the C-terminal section; belongs to the precorrin methyltransferase family.

It catalyses the reaction uroporphyrinogen III + 2 S-adenosyl-L-methionine = precorrin-2 + 2 S-adenosyl-L-homocysteine + H(+). The catalysed reaction is precorrin-2 + NAD(+) = sirohydrochlorin + NADH + 2 H(+). The enzyme catalyses siroheme + 2 H(+) = sirohydrochlorin + Fe(2+). It functions in the pathway cofactor biosynthesis; adenosylcobalamin biosynthesis; precorrin-2 from uroporphyrinogen III: step 1/1. Its pathway is cofactor biosynthesis; adenosylcobalamin biosynthesis; sirohydrochlorin from precorrin-2: step 1/1. The protein operates within porphyrin-containing compound metabolism; siroheme biosynthesis; precorrin-2 from uroporphyrinogen III: step 1/1. It participates in porphyrin-containing compound metabolism; siroheme biosynthesis; siroheme from sirohydrochlorin: step 1/1. It functions in the pathway porphyrin-containing compound metabolism; siroheme biosynthesis; sirohydrochlorin from precorrin-2: step 1/1. Its function is as follows. Multifunctional enzyme that catalyzes the SAM-dependent methylations of uroporphyrinogen III at position C-2 and C-7 to form precorrin-2 via precorrin-1. Then it catalyzes the NAD-dependent ring dehydrogenation of precorrin-2 to yield sirohydrochlorin. Finally, it catalyzes the ferrochelation of sirohydrochlorin to yield siroheme. In Xylella fastidiosa (strain M12), this protein is Siroheme synthase.